Reading from the N-terminus, the 513-residue chain is Zinc finger CCCH-type with G patch domain-containing protein (513 aa).

A C3H1-type zinc finger spans residues 155-178; that stretch reads PCSYYLEGECRFDETKCRFSHGAL. Over residues 252 to 261 the composition is skewed to acidic residues; the sequence is DQEEDDELSS. Positions 252 to 282 are disordered; sequence DQEEDDELSSEESNSSMNNESSDEAESDMDD. Positions 262–271 are enriched in low complexity; sequence EESNSSMNNE. Residues 272 to 282 are compositionally biased toward acidic residues; it reads SSDEAESDMDD. The G-patch domain maps to 312 to 358; sequence TRGIGSKLMEKMGYIHGTGLGSDGRGIVTPVSAQILPQGRSLDACME. Polar residues predominate over residues 478–495; sequence VQMQSHKQELATLQAQER. The segment at 478–513 is disordered; it reads VQMQSHKQELATLQAQERSLSKEQQTRKSKNKMFEF. Residues 496–513 show a composition bias toward basic and acidic residues; sequence SLSKEQQTRKSKNKMFEF.

The protein resides in the nucleus. Functionally, transcription repressor. This is Zinc finger CCCH-type with G patch domain-containing protein from Drosophila erecta (Fruit fly).